The primary structure comprises 149 residues: Transcriptional repressor NrdR (149 aa).

A zinc finger spans residues 3 to 34; that stretch reads CPFCSHLETQVIETRVFEDAASIRRRRQCAAC. The ATP-cone domain occupies 49–139; sequence PAVVKKDGRR…VYRSFEGIDD (91 aa).

This sequence belongs to the NrdR family. Zn(2+) is required as a cofactor.

Functionally, negatively regulates transcription of bacterial ribonucleotide reductase nrd genes and operons by binding to NrdR-boxes. The polypeptide is Transcriptional repressor NrdR (Verminephrobacter eiseniae (strain EF01-2)).